The primary structure comprises 506 residues: Dual specificity protein kinase shkC (506 aa).

A disordered region spans residues 1 to 21 (MDSGLGSSYPEERSGPPEIRP). Residues 10–21 (PEERSGPPEIRP) are compositionally biased toward basic and acidic residues. A Protein kinase domain is found at 24 to 284 (INFEELIGTG…IISALDHVII (261 aa)). ATP-binding positions include 30–38 (IGTGSFGKV) and Lys-51. Catalysis depends on Asp-147, which acts as the Proton acceptor. The 93-residue stretch at 396–488 (WFHGDLDTTE…KLDSQLGVPN (93 aa)) folds into the SH2 domain.

The protein belongs to the protein kinase superfamily. TKL Ser/Thr protein kinase family. SH2 domain-containing protein kinase subfamily.

It localises to the membrane. The catalysed reaction is L-seryl-[protein] + ATP = O-phospho-L-seryl-[protein] + ADP + H(+). The enzyme catalyses L-threonyl-[protein] + ATP = O-phospho-L-threonyl-[protein] + ADP + H(+). In terms of biological role, required for proper chemotaxis and phagocytosis; proper spatiotemporal control of F-actin levels in chemotaxing cells. Negative regulator of the PI3K (phosphatidylinositol 3 kinase) pathway. Predominantly phosphorylates serines and threonines and tyrosines at a lower level. The chain is Dual specificity protein kinase shkC (shkC) from Dictyostelium discoideum (Social amoeba).